A 45-amino-acid chain; its full sequence is Toxin Bcs III 15.09 (45 aa).

Residues 2-44 (QGTACTGEHAHNFCLNGGTCRHIQSLGEYYCICPEGYTGHRCE) enclose the EGF-like domain. 3 disulfides stabilise this stretch: cysteine 6-cysteine 21, cysteine 15-cysteine 32, and cysteine 34-cysteine 43.

The protein resides in the secreted. The protein localises to the nematocyst. Has both toxic and EGF activity. The polypeptide is Toxin Bcs III 15.09 (Bunodosoma caissarum (Sea anemone)).